The primary structure comprises 144 residues: MLIPKRVKYRKQHRPRGNGGVSKGGREVSFGEYGIQALEAGWITNRQIEAARIAMTRYIKRGGKVWIRIFPDKPITQKPAETRMGSGKGAPEHWVAVVKPGRVMFEVAGVPEATAREAMRLAMHKLPVKCKFVVRGEVGEANES.

A compositionally biased stretch (basic residues) spans 1 to 16 (MLIPKRVKYRKQHRPR). A disordered region spans residues 1 to 25 (MLIPKRVKYRKQHRPRGNGGVSKGG).

It belongs to the universal ribosomal protein uL16 family. Part of the 50S ribosomal subunit.

Functionally, binds 23S rRNA and is also seen to make contacts with the A and possibly P site tRNAs. The polypeptide is Large ribosomal subunit protein uL16 (Desulforamulus reducens (strain ATCC BAA-1160 / DSM 100696 / MI-1) (Desulfotomaculum reducens)).